We begin with the raw amino-acid sequence, 625 residues long: Threonine--tRNA ligase (625 aa).

Positions 1–147 are editing domain; that stretch reads MRMLLIHSDY…TIVPEEAKVE (147 aa). Positions 206-505 are catalytic; the sequence is PHVRLMLEHE…MQEGKKPMFP (300 aa). Zn(2+) contacts are provided by C298, H350, and H474.

This sequence belongs to the class-II aminoacyl-tRNA synthetase family. As to quaternary structure, homodimer. It depends on Zn(2+) as a cofactor.

The protein localises to the cytoplasm. The catalysed reaction is tRNA(Thr) + L-threonine + ATP = L-threonyl-tRNA(Thr) + AMP + diphosphate + H(+). In terms of biological role, catalyzes the attachment of threonine to tRNA(Thr) in a two-step reaction: L-threonine is first activated by ATP to form Thr-AMP and then transferred to the acceptor end of tRNA(Thr). Also edits incorrectly charged L-seryl-tRNA(Thr). The sequence is that of Threonine--tRNA ligase from Pyrococcus furiosus (strain ATCC 43587 / DSM 3638 / JCM 8422 / Vc1).